The chain runs to 371 residues: Probable alcohol acetyltransferase (371 aa).

Residues S124 and H295 each act as charge relay system in the active site. Positions 325 to 352 (AKALEESPKESYSRPPAHQQPLHKNDFT) are disordered. The segment covering 327-336 (ALEESPKESY) has biased composition (basic and acidic residues).

The protein belongs to the AB hydrolase superfamily.

In terms of biological role, probable alcohol acetyltransferase that uses acetyl-CoA to synthesize acetate esters from various alcohols. Not involved in the synthesis of ethyl acetate. The sequence is that of Probable alcohol acetyltransferase (EAT2) from Cyberlindnera fabianii (Yeast).